Here is an 836-residue protein sequence, read N- to C-terminus: Enhancer of polycomb homolog 1 (836 aa).

Lys-319 participates in a covalent cross-link: Glycyl lysine isopeptide (Lys-Gly) (interchain with G-Cter in SUMO2). Disordered regions lie at residues 335–360 (KRKY…SPAA) and 372–401 (YDFP…PDGP). Positions 346-360 (PSSAAATPQQTSPAA) are enriched in low complexity. Ser-539 carries the post-translational modification Phosphoserine. Lys-673 participates in a covalent cross-link: Glycyl lysine isopeptide (Lys-Gly) (interchain with G-Cter in SUMO2). Positions 802–829 (VPSSSSVDSVPRENHESEKPALNNIADN) are disordered. The span at 811–820 (VPRENHESEK) shows a compositional bias: basic and acidic residues.

This sequence belongs to the enhancer of polycomb family. In terms of assembly, component of the NuA4 histone acetyltransferase complex which contains the catalytic subunit KAT5/TIP60 and the subunits EP400, TRRAP/PAF400, BRD8/SMAP, EPC1, DMAP1/DNMAP1, RUVBL1/TIP49, RUVBL2, ING3, actin, ACTL6A/BAF53A, MORF4L1/MRG15, MORF4L2/MRGX, MRGBP, YEATS4/GAS41, VPS72/YL1 and MEAF6. KAT5/TIP60, EPC1, and ING3 together constitute a minimal HAT complex termed Piccolo NuA4. Component of a NuA4-related complex which contains EP400, TRRAP/PAF400, SRCAP, BRD8/SMAP, EPC1, DMAP1/DNMAP1, RUVBL1/TIP49, RUVBL2, actin, ACTL6A/BAF53A, VPS72 and YEATS4/GAS41. Interacts with TRIM27. Interacts with MBTD1; interaction is direct and promotes recruitment of MBTD1 into the NuA4 histone acetyltransferase complex.

The protein resides in the nucleus. The protein localises to the cytoplasm. Its function is as follows. Component of the NuA4 histone acetyltransferase (HAT) complex, a multiprotein complex involved in transcriptional activation of select genes principally by acetylation of nucleosomal histones H4 and H2A. The NuA4 complex plays a direct role in repair of DNA double-strand breaks (DSBs) by promoting homologous recombination (HR). The NuA4 complex is also required for spermatid development by promoting acetylation of histones: histone acetylation is required for histone replacement during the transition from round to elongating spermatids. In the NuA4 complex, EPC1 is required to recruit MBTD1 into the complex. The sequence is that of Enhancer of polycomb homolog 1 from Homo sapiens (Human).